Consider the following 110-residue polypeptide: Phosphoribosyl-ATP pyrophosphatase (110 aa).

This sequence belongs to the PRA-PH family.

The protein resides in the cytoplasm. It carries out the reaction 1-(5-phospho-beta-D-ribosyl)-ATP + H2O = 1-(5-phospho-beta-D-ribosyl)-5'-AMP + diphosphate + H(+). Its pathway is amino-acid biosynthesis; L-histidine biosynthesis; L-histidine from 5-phospho-alpha-D-ribose 1-diphosphate: step 2/9. The sequence is that of Phosphoribosyl-ATP pyrophosphatase from Pseudomonas syringae pv. syringae (strain B728a).